We begin with the raw amino-acid sequence, 175 residues long: Homeobox expressed in ES cells 1 (175 aa).

The segment at Met1–Pro44 is disordered. Positions Gly108 to His167 form a DNA-binding region, homeobox.

This sequence belongs to the ANF homeobox family. Interacts with TLE1.

The protein localises to the nucleus. In terms of biological role, required for the normal development of the forebrain, eyes and other anterior structures such as the olfactory placodes and pituitary gland. Possible transcriptional repressor. Binds to the palindromic PIII sequence, 5'-AGCTTGAGTCTAATTGAATTAACTGTAC-3'. The sequence is that of Homeobox expressed in ES cells 1 (HESX1) from Oryctolagus cuniculus (Rabbit).